Reading from the N-terminus, the 83-residue chain is Small ribosomal subunit protein eS21 (83 aa).

This sequence belongs to the eukaryotic ribosomal protein eS21 family. Component of the 40S small ribosomal subunit.

It localises to the cytoplasm. The protein localises to the cytosol. Its subcellular location is the rough endoplasmic reticulum. Its function is as follows. Component of the small ribosomal subunit. The ribosome is a large ribonucleoprotein complex responsible for the synthesis of proteins in the cell. This is Small ribosomal subunit protein eS21 (rps21) from Ictalurus punctatus (Channel catfish).